The chain runs to 504 residues: Zinc finger protein AEBP2 (504 aa).

Residues 1 to 219 (MAAALADMAD…SRMDSEDSIS (219 aa)) are disordered. At alanine 2 the chain carries N-acetylalanine. Residues 16–30 (RLSPLSPGSPGPAAR) show a composition bias toward low complexity. 3 positions are modified to phosphoserine: serine 18, serine 21, and serine 24. Residues 36–49 (PEEEEEEDDEEAEA) show a composition bias toward acidic residues. Over residues 59 to 69 (GGAGGGAGGGE) the composition is skewed to gly residues. Over residues 86–110 (GDEDEDEEDDEDEGSSSGGAEEESS) the composition is skewed to acidic residues. Positions 129–140 (SLSPGAASSSSG) are enriched in low complexity. Residue serine 131 is modified to Phosphoserine. The span at 142 to 153 (GDGKEGLEEPKG) shows a compositional bias: basic and acidic residues. Gly residues-rich tracts occupy residues 154 to 168 (PRGGPGGPGSSGGGS) and 178 to 189 (GDEGYGTGGGGS). A phosphoserine mark is found at serine 199, serine 203, and serine 204. The interaction with RBBP4 stretch occupies residues 202–287 (MSSDGEPLSR…IHVDGQRGGV (86 aa)). The segment at 254–279 (YNCCWDQCQACFNSSPDLADHIRSIH) adopts a C2H2-type 1 zinc-finger fold. The C2H2-type 2; degenerate zinc finger occupies 293-315 (KGCKVYNTPSTSQSWLQRHMLTH). The C2H2-type 3 zinc-finger motif lies at 321–345 (FKCVVGGCNASFASQGGLARHVPTH). Residues 345-358 (HFSQQNSSKVSSQP) are compositionally biased toward polar residues. Positions 345–387 (HFSQQNSSKVSSQPKAKEESPSKAGMNKRRKLKNKRRRSLPRP) are disordered. Positions 370–385 (MNKRRKLKNKRRRSLP) are enriched in basic residues. At serine 383 the chain carries Phosphoserine. The interaction with SUZ12 stretch occupies residues 400–471 (RHRAICFNLS…QLKTKVVHLS (72 aa)). The segment at 488–504 (TMPQKRLKRFDILNFPR) is important for nucleosome binding activity of the PRC2 complex.

This sequence belongs to the AEBP2/jing C2H2-type zinc-finger family. As to quaternary structure, self-associates. Associates with the PRC2 complex, which consists of the core components EED, EZH1 or EZH2, SUZ12, and RBBP4, and various combinations of accessory subunits including AEBP2, JARID2, PHF19, MTF2 and EPOP. Found in a monomeric PRC2.2 (class 2) complex consisting of at least SUZ12, RBBP4, AEBP2 and JARID2. Within the PRC2 complex, interacts directly with SUZ12; competes with PHF19 for SUZ12 binding. Interacts with EED, EZH2, and RBBP4. May also interact with RBBP7. As to expression, expressed in brain, brown adipose tissue, white adipose tissue, heart, kidney, lung, skeletal muscle, small intestine and spleen. Expressed at low levels in liver.

Its subcellular location is the nucleus. Acts as an accessory subunit for the core Polycomb repressive complex 2 (PRC2), which mediates histone H3K27 (H3K27me3) trimethylation on chromatin leading to transcriptional repression of the affected target gene. Plays a role in nucleosome localization of the PRC2 complex. This chain is Zinc finger protein AEBP2 (Aebp2), found in Mus musculus (Mouse).